The primary structure comprises 359 residues: METQLSNGPTCNNTANGPTTINNNCSSPVDSGNTEDSKTNLIVNYLPQNMTQEELKSLFGSIGEIESCKLVRDKITGQSLGYGFVNYIDPKDAEKAINTLNGLRLQTKTIKVSYARPSSASIRDANLYVSGLPKTMTQKELEQLFSQYGRIITSRILVDQVTGISRGVGFIRFDKRIEAEEAIKGLNGQKPPGATEPITVKFANNPSQKTNQAILSQLYQSPNRRYPGPLAQQAQRFRLDNLLNMAYGVKRFSPMTIDGMTSLAGINIPGHPGTGWCIFVYNLAPDADESILWQMFGPFGAVTNVKVIRDFNTNKCKGFGFVTMTNYDEAAMAIASLNGYRLGDRVLQVSFKTNKTHKA.

The disordered stretch occupies residues 1–33; that stretch reads METQLSNGPTCNNTANGPTTINNNCSSPVDSGN. RRM domains follow at residues 39–117 and 125–205; these read TNLI…YARP and ANLY…FANN. Phosphoserine is present on serine 221. The RRM 3 domain maps to 276-354; it reads WCIFVYNLAP…RVLQVSFKTN (79 aa).

It belongs to the RRM elav family. In terms of assembly, interacts with IGF2BP1. Interacts with MAP1B light chain LC1.

In terms of biological role, RNA-binding protein that binds to the 3' untranslated region (3'UTR) of target mRNAs. Seems to recognize a GAAA motif. Can bind to its own 3'UTR, the FOS 3'UTR and the ID 3'UTR. The sequence is that of ELAV-like protein 2 (ELAVL2) from Pongo abelii (Sumatran orangutan).